The following is a 216-amino-acid chain: Adenylate kinase (216 aa).

10–15 contacts ATP; that stretch reads GAGKGT. Residues 30–59 form an NMP region; the sequence is STGDIFRANIKEKTPLGIEAKRYMDNGQLV. AMP contacts are provided by residues threonine 31, arginine 36, 57–59, 85–88, and glutamine 92; these read QLV and GFPR. Residues 126 to 163 are LID; it reads GRRVCTSCGASYHIRFNPPKIEGKCDICDNELIQRKDD. Arginine 127 is a binding site for ATP. Residues cysteine 130 and cysteine 133 each coordinate Zn(2+). Position 136–137 (136–137) interacts with ATP; it reads SY. Zn(2+) contacts are provided by cysteine 150 and cysteine 153. AMP is bound by residues arginine 160 and arginine 171. Glutamate 199 provides a ligand contact to ATP.

The protein belongs to the adenylate kinase family. As to quaternary structure, monomer.

The protein resides in the cytoplasm. The catalysed reaction is AMP + ATP = 2 ADP. It functions in the pathway purine metabolism; AMP biosynthesis via salvage pathway; AMP from ADP: step 1/1. Its function is as follows. Catalyzes the reversible transfer of the terminal phosphate group between ATP and AMP. Plays an important role in cellular energy homeostasis and in adenine nucleotide metabolism. This Clostridium botulinum (strain Loch Maree / Type A3) protein is Adenylate kinase.